A 66-amino-acid chain; its full sequence is MRKGIHPEYMECKVTCACGNKFEVRSNKPEMSIDICNECHPFFTGSEKILDAAGRVDKFKKKYNLG.

Zn(2+)-binding residues include Cys-16, Cys-18, Cys-36, and Cys-39.

The protein belongs to the bacterial ribosomal protein bL31 family. Type A subfamily. Part of the 50S ribosomal subunit. Requires Zn(2+) as cofactor.

Its function is as follows. Binds the 23S rRNA. The chain is Large ribosomal subunit protein bL31 from Sulfurovum sp. (strain NBC37-1).